The primary structure comprises 1111 residues: MRLILLVLLATWQVVVDTRAPTFPDKLTQQLQQQGTTEPQGDHVCTVKTIVDDYELKKVIHTVVYNDTEQCLNPLTGFQCTVEKRGQKASYQRQLVKKEKYVKQCCDGYYQTKDHFCLPDCNPPCKKGKCIEPGKCECDPGYGGKYCASSCSVGTWGLGCSKSCDCENGANCDPELGTCICTSGFQGERCEKPCPDNKWGPNCVKSCPCQNGGKCNKEGKCVCSDGWGGEFCLNKCEEGKFGAECKFECNCQNGATCDNTNGKCICKSGYHGALCENECSVGFFGSGCTQKCDCLNNQNCDSSSGECKCIGWTGKHCDIGCSRGRFGLQCKQNCTCPGLEFSDSNASCDAKTGQCQCESGYKGPKCDERKCDAEQYGADCSKTCTCVRENTLMCAPNTGFCRCKPGFYGDNCELACSKDSYGPNCEKQAMCDWNHASECNPETGSCVCKPGRTGKNCSEPCPLDFYGPNCAHQCQCNQRGVGCDGADGKCQCDRGWTGHRCEHHCPADTFGANCEKRCKCPKGIGCDPITGECTCPAGLQGANCDIGCPEGSYGPGCKLHCKCVNGKCDKETGECTCQPGFFGSDCSTTCSKGKYGESCELSCPCSDASCSKQTGKCLCPLGTKGVSCDQKCDPNTFGFLCQETVTPSPCASTDPKNGVCLSCPPGSSGIHCEHNCPAGSYGDGCQQVCSCADGHGCDPTTGECICEPGYHGKTCSEKCPDGKYGYGCALDCPKCASGSTCDHINGLCICPAGLEGALCTRPCSAGFWGNGCRQVCRCTSEYKQCNAQTGECSCPAGFQGDRCDKPCEDGYYGPDCIKKCKCQGTATSSCNRVSGACHCHPGFTGEFCHALCPESTFGLKCSKECPKDGCGDGYECDAAIGCCHVDQMSCGKAKQEFEALNGAGRSTGLTWFFVLLIVALCGGLGLIALFYRNKYQKEKDPDMPTVSFHKAPNNDEGREFQNPLYSRQSVFPDSDAFSSENNGNHQGGPPNGLLTLEEEELENKKIHGRSAAGRGNNDYASLDEVAGEGSSSSASASASRRGLNSSEQSRRPLLEEHDEEEFDEPHENSISPAHAVTTSNHNENPYADISSPDPVTQNSANKKRAQDNLYT.

Residues 1–18 (MRLILLVLLATWQVVVDT) form the signal peptide. Topologically, residues 19 to 910 (RAPTFPDKLT…NGAGRSTGLT (892 aa)) are extracellular. An EMI domain is found at 41 to 113 (GDHVCTVKTI…QCCDGYYQTK (73 aa)). Cystine bridges form between cysteine 45/cysteine 106, cysteine 71/cysteine 80, cysteine 105/cysteine 117, cysteine 121/cysteine 130, cysteine 125/cysteine 136, cysteine 138/cysteine 147, cysteine 160/cysteine 172, cysteine 166/cysteine 179, cysteine 181/cysteine 190, cysteine 203/cysteine 215, cysteine 209/cysteine 221, cysteine 223/cysteine 232, cysteine 245/cysteine 257, cysteine 251/cysteine 264, and cysteine 266/cysteine 275. N-linked (GlcNAc...) asparagine glycosylation occurs at asparagine 66. EGF-like domains follow at residues 118 to 148 (LPDCNPPCKKGKCIEPGKCECDPGYGGKYCA), 156 to 191 (WGLGCSKSCDCENGANCDPELGTCICTSGFQGERCE), 199 to 233 (WGPNCVKSCPCQNGGKCNKEGKCVCSDGWGGEFCL), and 241 to 276 (FGAECKFECNCQNGATCDNTNGKCICKSGYHGALCE). N-linked (GlcNAc...) asparagine glycans are attached at residues asparagine 333 and asparagine 345. An EGF-like 5 domain is found at 421–458 (YGPNCEKQAMCDWNHASECNPETGSCVCKPGRTGKNCS). 3 cysteine pairs are disulfide-bonded: cysteine 425-cysteine 439, cysteine 431-cysteine 446, and cysteine 448-cysteine 457. N-linked (GlcNAc...) asparagine glycosylation occurs at asparagine 456. The stretch at 629–680 (DQKCDPNTFGFLCQETVTPSPCASTDPKNGVCLSCPPGSSGIHCEHNCPAGS) is one FU repeat. The EGF-like 6 domain occupies 681-716 (YGDGCQQVCSCADGHGCDPTTGECICEPGYHGKTCS). 3 cysteine pairs are disulfide-bonded: cysteine 685–cysteine 697, cysteine 691–cysteine 704, and cysteine 706–cysteine 715. A helical transmembrane segment spans residues 911-931 (WFFVLLIVALCGGLGLIALFY). The tract at residues 931–1007 (YRNKYQKEKD…EEELENKKIH (77 aa)) is interaction with trim-21. Residues 932 to 1111 (RNKYQKEKDP…KKRAQDNLYT (180 aa)) lie on the Cytoplasmic side of the membrane. Disordered stretches follow at residues 940 to 993 (DPDM…PNGL) and 1006 to 1111 (IHGR…NLYT). Residues 962–965 (NPLY) carry the NPXY motif. Polar residues predominate over residues 963–980 (PLYSRQSVFPDSDAFSSE). The residue at position 1019 (tyrosine 1019) is a Phosphotyrosine; by SRC. The short motif at 1019–1022 (YASL) is the YXXL element. The segment covering 1030 to 1039 (SSSSASASAS) has biased composition (low complexity). Polar residues predominate over residues 1068-1083 (NSISPAHAVTTSNHNE).

In terms of assembly, interacts (via C-terminus) with ced-6 (via PTB domain). Interacts with nck-1; the interaction is required for ced-1 degradation through the proteasome pathway. Interacts with V-ATPase vha-10. In terms of processing, phosphorylation of Tyr-1019, within the YXXL motif, by src-1 is thought to initiate phagosomal formation. Post-translationally, 'Lys-48'-linked polyubiquitination by trim-21 leads to proteasomal degradation. Expressed in engulfing cells and syncytium hypodermal cells. Ced-7 is necessary for clustering around cell corpses prior to engulfment.

Its subcellular location is the cell membrane. The protein localises to the cytoplasmic vesicle. The protein resides in the phagosome membrane. In terms of biological role, involved in programmed cell death, also called apoptosis, in both somatic and germ cells. Acts by recruiting ced-6 to phagosomes which enables actin-dependent cytoskeletal reorganization and subsequent engulfment of the apoptotic cell corpse. Has a role in the association of ppk-3 and rab-7 with the phagosomal surface which is necessary for the incorporation of lysosomes to phagosomes during phagosome maturation. Activates the expression of unfolded protein response genes, which are involved in the immune response to live bacteria. The chain is Cell death abnormality protein 1 from Caenorhabditis elegans.